Here is a 446-residue protein sequence, read N- to C-terminus: Rhoptry surface protein CERLI1 (446 aa).

Residues 39–208 (KPIGQLYRLM…NQTKNNEKIE (170 aa)) form the C2 domain. The 112-residue stretch at 252 to 363 (GYLLHSNFYI…ILVSNYKRER (112 aa)) folds into the PH domain.

The protein localises to the cytoplasmic vesicle. It is found in the secretory vesicle. The protein resides in the rhoptry membrane. Essential for merozoite invasion of host cells by controlling rhoptry secretion. Binds to phosphatidic acid (PA) and phosphatidylinositol 4,5-bisphosphate (PIP2) lipids and thus, likely contributes to the assembly of the machinery that docks or primes the rhoptry to the parasite cell membrane prior to the fusion with the host cell membrane. This is Rhoptry surface protein CERLI1 from Plasmodium falciparum (isolate 3D7).